A 194-amino-acid chain; its full sequence is Imidazoleglycerol-phosphate dehydratase (194 aa).

This sequence belongs to the imidazoleglycerol-phosphate dehydratase family.

It is found in the cytoplasm. The enzyme catalyses D-erythro-1-(imidazol-4-yl)glycerol 3-phosphate = 3-(imidazol-4-yl)-2-oxopropyl phosphate + H2O. Its pathway is amino-acid biosynthesis; L-histidine biosynthesis; L-histidine from 5-phospho-alpha-D-ribose 1-diphosphate: step 6/9. The chain is Imidazoleglycerol-phosphate dehydratase from Bacillus subtilis (strain 168).